The chain runs to 264 residues: tRNA pseudouridine synthase A (264 aa).

Residue Asp-51 is the Nucleophile of the active site. Residue Tyr-109 coordinates substrate.

The protein belongs to the tRNA pseudouridine synthase TruA family. In terms of assembly, homodimer.

The catalysed reaction is uridine(38/39/40) in tRNA = pseudouridine(38/39/40) in tRNA. Functionally, formation of pseudouridine at positions 38, 39 and 40 in the anticodon stem and loop of transfer RNAs. The sequence is that of tRNA pseudouridine synthase A from Polaromonas naphthalenivorans (strain CJ2).